A 490-amino-acid polypeptide reads, in one-letter code: Betaine aldehyde dehydrogenase (490 aa).

NAD(+) contacts are provided by residues Lys174, Glu177, and 227–232; that span reads GGIETG. Residues Glu249 and Cys283 contribute to the active site. Glu384 contributes to the NAD(+) binding site.

This sequence belongs to the aldehyde dehydrogenase family. Homodimer.

The enzyme catalyses betaine aldehyde + NAD(+) + H2O = glycine betaine + NADH + 2 H(+). It functions in the pathway amine and polyamine biosynthesis; betaine biosynthesis via choline pathway; betaine from betaine aldehyde: step 1/1. Its activity is regulated as follows. Activity is stimulated by low concentrations of salts and by moderate concentrations of glycine betaine. Highly tolerant to high ionic conditions. In vitro, activity is highly stimulated in the presence of proline. Functionally, involved in the biosynthesis of the osmoprotectant glycine betaine from choline. Catalyzes the oxidation of betaine aldehyde to betaine. Shows specificity for betaine aldehyde as substrate. Can use both NAD(+) and NADP(+), but NAD(+) is strongly preferred. The sequence is that of Betaine aldehyde dehydrogenase from Bacillus subtilis (strain 168).